A 458-amino-acid polypeptide reads, in one-letter code: Retinoic acid receptor alpha (458 aa).

The modulating stretch occupies residues 1-87; that stretch reads MSSKDNTCPP…PPPLPRIYKP (87 aa). Residues 39-78 form a disordered region; it reads GGLPGVQHQPPLSGYSTPSPATIETQSTSSEEIVPSPPTP. Over residues 52–69 the composition is skewed to polar residues; sequence GYSTPSPATIETQSTSSE. NR C4-type zinc fingers lie at residues 88–108 and 124–148; these read CFVC…CEGC and CHRD…LQKC. The segment at residues 88-153 is a DNA-binding region (nuclear receptor); sequence CFVCQDKSSG…RLQKCFEVGM (66 aa). A hinge region spans residues 154–182; the sequence is SKESVRNDRNKKKKESPKPEAIESYILSP. In terms of domain architecture, NR LBD spans 183–417; that stretch reads ETQDLIEKVQ…LIQEMLENSE (235 aa). The 9aaTAD signature appears at 407 to 415; sequence PLIQEMLEN. Residues 419-458 are disordered; sequence LDTLGGGASSDAPVTPVAPGSCSPSLSPSSTHSSPSTHSP. A compositionally biased stretch (low complexity) spans 439–458; it reads SCSPSLSPSSTHSSPSTHSP.

This sequence belongs to the nuclear hormone receptor family. NR1 subfamily. Heterodimer; with an rxr molecule. Binds DNA preferentially as a rar/rxr heterodimer.

It localises to the nucleus. Functionally, receptor for retinoic acid. Retinoic acid receptors bind as heterodimers to their target response elements in response to their ligands, all-trans or 9-cis retinoic acid, and regulate gene expression in various biological processes. The rar/rxr heterodimers bind to the retinoic acid response elements (RARE) composed of tandem 5'-AGGTCA-3' sites known as DR1-DR5. Required for primary neurogenesis and for anteroposterior neural patterning. The protein is Retinoic acid receptor alpha (rara) of Xenopus laevis (African clawed frog).